The sequence spans 465 residues: Probable multidrug resistance protein NorM (465 aa).

10 helical membrane-spanning segments follow: residues 50–72, 92–114, 127–149, 164–186, 193–215, 248–270, 283–305, 320–342, 393–412, and 422–444; these read MAAI…GLLL, HQVR…LIYH, HLAQ…YLLL, PAMI…FIYG, FGAV…LMIS, GLPI…LLLS, ALNT…TILV, ISYV…TVVL, ILYI…GYIL, and MGPT…LLFY.

Belongs to the multi antimicrobial extrusion (MATE) (TC 2.A.66.1) family.

The protein resides in the cell inner membrane. Multidrug efflux pump. This chain is Probable multidrug resistance protein NorM (norM), found in Mannheimia succiniciproducens (strain KCTC 0769BP / MBEL55E).